We begin with the raw amino-acid sequence, 397 residues long: Vacuolar protein sorting-associated protein 37A (397 aa).

Residue Ser18 is modified to Phosphoserine. The region spanning 308 to 397 (KSTFEKKMQR…AMHSQFHAPL (90 aa)) is the VPS37 C-terminal domain.

It belongs to the VPS37 family. As to quaternary structure, component of the ESCRT-I complex (endosomal sorting complex required for transport I) which consists of TSG101, VPS28, a VPS37 protein (VPS37A to -D) and MVB12A or MVB12B in a 1:1:1:1 stoichiometry. Interacts with TSG101, VPS28 and HGS. Component of an ESCRT-I complex (endosomal sorting complex required for transport I) which consists of TSG101, VPS28, VPS37A and UBAP1 in a 1:1:1:1 stoichiometry.

It is found in the late endosome membrane. It localises to the nucleus. Functionally, component of the ESCRT-I complex, a regulator of vesicular trafficking process. Required for the sorting of endocytic ubiquitinated cargos into multivesicular bodies. May be involved in cell growth and differentiation. This chain is Vacuolar protein sorting-associated protein 37A (Vps37a), found in Mus musculus (Mouse).